The sequence spans 211 residues: Probable nicotinate-nucleotide adenylyltransferase (211 aa).

It belongs to the NadD family.

It carries out the reaction nicotinate beta-D-ribonucleotide + ATP + H(+) = deamido-NAD(+) + diphosphate. Its pathway is cofactor biosynthesis; NAD(+) biosynthesis; deamido-NAD(+) from nicotinate D-ribonucleotide: step 1/1. Functionally, catalyzes the reversible adenylation of nicotinate mononucleotide (NaMN) to nicotinic acid adenine dinucleotide (NaAD). This chain is Probable nicotinate-nucleotide adenylyltransferase, found in Legionella pneumophila (strain Corby).